The sequence spans 288 residues: UDP-3-O-acyl-N-acetylglucosamine deacetylase (288 aa).

Zn(2+)-binding residues include His79, His236, and Asp240. His263 acts as the Proton donor in catalysis.

It belongs to the LpxC family. Zn(2+) serves as cofactor.

It carries out the reaction a UDP-3-O-[(3R)-3-hydroxyacyl]-N-acetyl-alpha-D-glucosamine + H2O = a UDP-3-O-[(3R)-3-hydroxyacyl]-alpha-D-glucosamine + acetate. Its pathway is glycolipid biosynthesis; lipid IV(A) biosynthesis; lipid IV(A) from (3R)-3-hydroxytetradecanoyl-[acyl-carrier-protein] and UDP-N-acetyl-alpha-D-glucosamine: step 2/6. Catalyzes the hydrolysis of UDP-3-O-myristoyl-N-acetylglucosamine to form UDP-3-O-myristoylglucosamine and acetate, the committed step in lipid A biosynthesis. The polypeptide is UDP-3-O-acyl-N-acetylglucosamine deacetylase (Rickettsia conorii (strain ATCC VR-613 / Malish 7)).